Here is a 143-residue protein sequence, read N- to C-terminus: uncharacterized protein (143 aa).

The protein resides in the cytoplasm. It localises to the nucleus. This is an uncharacterized protein from Schizosaccharomyces pombe (strain 972 / ATCC 24843) (Fission yeast).